The primary structure comprises 149 residues: Ribonuclease H (149 aa).

The region spanning 4-145 (QRGVVEAFTD…ADALANQGID (142 aa)) is the RNase H type-1 domain. Mg(2+)-binding residues include Asp-13, Glu-51, Asp-73, and Asp-137.

This sequence belongs to the RNase H family. As to quaternary structure, monomer. It depends on Mg(2+) as a cofactor.

It localises to the cytoplasm. The enzyme catalyses Endonucleolytic cleavage to 5'-phosphomonoester.. Endonuclease that specifically degrades the RNA of RNA-DNA hybrids. In Halorhodospira halophila (strain DSM 244 / SL1) (Ectothiorhodospira halophila (strain DSM 244 / SL1)), this protein is Ribonuclease H.